A 385-amino-acid polypeptide reads, in one-letter code: Succinyl-diaminopimelate desuccinylase (385 aa).

H78 is a Zn(2+) binding site. Residue D80 is part of the active site. Residue D110 participates in Zn(2+) binding. E144 functions as the Proton acceptor in the catalytic mechanism. The Zn(2+) site is built by E145, E173, and H358.

This sequence belongs to the peptidase M20A family. DapE subfamily. As to quaternary structure, homodimer. Requires Zn(2+) as cofactor. It depends on Co(2+) as a cofactor.

It carries out the reaction N-succinyl-(2S,6S)-2,6-diaminopimelate + H2O = (2S,6S)-2,6-diaminopimelate + succinate. Its pathway is amino-acid biosynthesis; L-lysine biosynthesis via DAP pathway; LL-2,6-diaminopimelate from (S)-tetrahydrodipicolinate (succinylase route): step 3/3. Functionally, catalyzes the hydrolysis of N-succinyl-L,L-diaminopimelic acid (SDAP), forming succinate and LL-2,6-diaminopimelate (DAP), an intermediate involved in the bacterial biosynthesis of lysine and meso-diaminopimelic acid, an essential component of bacterial cell walls. The polypeptide is Succinyl-diaminopimelate desuccinylase (Gluconacetobacter diazotrophicus (strain ATCC 49037 / DSM 5601 / CCUG 37298 / CIP 103539 / LMG 7603 / PAl5)).